The following is a 124-amino-acid chain: Small ribosomal subunit protein uS12 (124 aa).

3-methylthioaspartic acid is present on aspartate 89.

Belongs to the universal ribosomal protein uS12 family. Part of the 30S ribosomal subunit. Contacts proteins S8 and S17. May interact with IF1 in the 30S initiation complex.

In terms of biological role, with S4 and S5 plays an important role in translational accuracy. Its function is as follows. Interacts with and stabilizes bases of the 16S rRNA that are involved in tRNA selection in the A site and with the mRNA backbone. Located at the interface of the 30S and 50S subunits, it traverses the body of the 30S subunit contacting proteins on the other side and probably holding the rRNA structure together. The combined cluster of proteins S8, S12 and S17 appears to hold together the shoulder and platform of the 30S subunit. The polypeptide is Small ribosomal subunit protein uS12 (Aeromonas hydrophila subsp. hydrophila (strain ATCC 7966 / DSM 30187 / BCRC 13018 / CCUG 14551 / JCM 1027 / KCTC 2358 / NCIMB 9240 / NCTC 8049)).